A 182-amino-acid polypeptide reads, in one-letter code: ATP-dependent protease subunit HslV (182 aa).

Residue threonine 2 is part of the active site. Residues glycine 157, cysteine 160, and threonine 163 each contribute to the Na(+) site.

Belongs to the peptidase T1B family. HslV subfamily. A double ring-shaped homohexamer of HslV is capped on each side by a ring-shaped HslU homohexamer. The assembly of the HslU/HslV complex is dependent on binding of ATP.

The protein localises to the cytoplasm. The catalysed reaction is ATP-dependent cleavage of peptide bonds with broad specificity.. With respect to regulation, allosterically activated by HslU binding. Its function is as follows. Protease subunit of a proteasome-like degradation complex believed to be a general protein degrading machinery. The polypeptide is ATP-dependent protease subunit HslV (Sodalis glossinidius (strain morsitans)).